The chain runs to 67 residues: Guanine nucleotide-binding protein G(I)/G(S)/G(O) subunit gamma-13 (67 aa).

Cys-64 carries the post-translational modification Cysteine methyl ester. Cys-64 is lipidated: S-farnesyl cysteine. Residues 65-67 constitute a propeptide, removed in mature form; sequence TIL.

The protein belongs to the G protein gamma family. As to quaternary structure, g proteins are composed of 3 units, alpha, beta and gamma.

The protein localises to the cell membrane. Guanine nucleotide-binding proteins (G proteins) are involved as a modulator or transducer in various transmembrane signaling systems. The beta and gamma chains are required for the GTPase activity, for replacement of GDP by GTP, and for G protein-effector interaction. The polypeptide is Guanine nucleotide-binding protein G(I)/G(S)/G(O) subunit gamma-13 (GNG13) (Homo sapiens (Human)).